The following is a 304-amino-acid chain: MSERLRVQIPGLDLKNPIMPASGCFAFGIEYAELYDISKLGAIMIKAATKEARFGNPTPRVAETSSGMLNAIGLQNPGVDEIISNQLKKLEKYDVPIIANVAGSDIEDYVYVANKISKSPNVKALELNISCPNVKHGGIQFGTDPNVARNLTEKVKAVSSVPVYVKLSPNVTDIVAMAKAVETGGADGLTMINTLVGIVLDRKTGKPIIANTTGGLSGPAIRPVAIRMVYQVAQAVNIPIIGMGGVMDEWDVIDFISAGASAVAVGTANFTDPFVCPKIIDSLELALDKLGVNHILDLKGRAFR.

Residues serine 22 and lysine 46–alanine 47 each bind FMN. Substrate contacts are provided by residues lysine 46 and asparagine 70–leucine 74. FMN-binding residues include asparagine 100 and asparagine 128. Substrate is bound at residue asparagine 128. Cysteine 131 functions as the Nucleophile in the catalytic mechanism. FMN contacts are provided by lysine 166 and isoleucine 192. Residue asparagine 193–threonine 194 coordinates substrate. FMN contacts are provided by residues glycine 218, glycine 244–glycine 245, and glycine 266–threonine 267.

The protein belongs to the dihydroorotate dehydrogenase family. Type 1 subfamily. In terms of assembly, heterotetramer of 2 PyrK and 2 PyrD type B subunits. It depends on FMN as a cofactor.

It is found in the cytoplasm. It catalyses the reaction (S)-dihydroorotate + NAD(+) = orotate + NADH + H(+). Its pathway is pyrimidine metabolism; UMP biosynthesis via de novo pathway; orotate from (S)-dihydroorotate (NAD(+) route): step 1/1. In terms of biological role, catalyzes the conversion of dihydroorotate to orotate with NAD(+) as electron acceptor. The sequence is that of Dihydroorotate dehydrogenase B (NAD(+)), catalytic subunit (pyrD) from Fusobacterium nucleatum subsp. nucleatum (strain ATCC 25586 / DSM 15643 / BCRC 10681 / CIP 101130 / JCM 8532 / KCTC 2640 / LMG 13131 / VPI 4355).